A 321-amino-acid polypeptide reads, in one-letter code: Ribonucleoside-diphosphate reductase small subunit (321 aa).

Positions 78, 108, and 111 each coordinate Fe cation. The active site involves Y115. A helical transmembrane segment spans residues 165 to 185; that stretch reads ILMILIEGLFFASSFASIAYL. Residues E171, E205, and H208 each contribute to the Fe cation site.

It belongs to the ribonucleoside diphosphate reductase small chain family. Heterotetramer composed of a homodimer of the large subunit (R1) and a homodimer of the small subunit (R2). Larger multisubunit protein complex are also active, composed of (R1)n(R2)n. Fe cation is required as a cofactor.

It is found in the host membrane. The catalysed reaction is a 2'-deoxyribonucleoside 5'-diphosphate + [thioredoxin]-disulfide + H2O = a ribonucleoside 5'-diphosphate + [thioredoxin]-dithiol. In terms of biological role, ribonucleoside-diphosphate reductase holoenzyme provides the precursors necessary for viral DNA synthesis. Allows virus growth in non-dividing cells, as well as reactivation from latency in infected hosts. Catalyzes the biosynthesis of deoxyribonucleotides from the corresponding ribonucleotides. The polypeptide is Ribonucleoside-diphosphate reductase small subunit (Equus caballus (Horse)).